The primary structure comprises 84 residues: Gomesin-like peptide (84 aa).

A signal peptide spans 1-23 (MNRTRALVCLFLAVLILAHESEA). Q24 carries the post-translational modification Pyrrolidone carboxylic acid. 2 disulfides stabilise this stretch: C25–C38 and C29–C34. Arginine amide is present on R41. Residues 42–84 (GKRSVEEPSGGAQVVEKRAVDDADIPSAVEERELDEEESIEFR) constitute a propeptide that is removed on maturation.

As to expression, expressed by the venom gland.

It is found in the secreted. In terms of biological role, antibacterial peptide. This is Gomesin-like peptide from Hadronyche infensa (Fraser island funnel-web spider).